Reading from the N-terminus, the 587-residue chain is Arginine--tRNA ligase (587 aa).

A 'HIGH' region motif is present at residues 127–137; it reads PNLAKEMHVGH.

This sequence belongs to the class-I aminoacyl-tRNA synthetase family. As to quaternary structure, monomer.

The protein localises to the cytoplasm. It carries out the reaction tRNA(Arg) + L-arginine + ATP = L-arginyl-tRNA(Arg) + AMP + diphosphate. This is Arginine--tRNA ligase from Pseudomonas aeruginosa (strain LESB58).